A 407-amino-acid polypeptide reads, in one-letter code: Peptidase T (407 aa).

Position 78 (histidine 78) interacts with Zn(2+). Aspartate 80 is an active-site residue. Residue aspartate 139 coordinates Zn(2+). Residue glutamate 173 is the Proton acceptor of the active site. Zn(2+) is bound by residues glutamate 174, aspartate 196, and histidine 378.

Belongs to the peptidase M20B family. Requires Zn(2+) as cofactor.

The protein localises to the cytoplasm. It catalyses the reaction Release of the N-terminal residue from a tripeptide.. Its function is as follows. Cleaves the N-terminal amino acid of tripeptides. This is Peptidase T from Shewanella halifaxensis (strain HAW-EB4).